The primary structure comprises 453 residues: MEASLLKKNQSIELTIEDLTHDGSGVGKIDGYPFFIPNTLPGEKVTAKIIKLNKNYGFARMENIETVSANRVEPPCAVYSKCGGCSLQHLSYDGQLEFKRNQVEETMKRIGKLNVEVPETLGMENPWRYRNKSQVPVGFVNGKLTAGFYQKRSHAIIDMSTCLIHNEQGDFAVQKTREILAKYGTEPYDEQTGKGDIRHIMTRFAHTTGQLMIVLVTTKERMPFKEEIVRDLVEQLELTSIVQNINPHKTNVIFGDRTKTLWGKDIIEDTIHGIRFAISARSFYQVNPLQTEVLYQQAIDAAELTGEETVIDAYCGIGSISLCLAKKAKHVYGVEIVDQAIQDARANAELNELANTTFETGKAEEVIPSWYKAGIVADVLVVDPPRKGCDEKLLETILAMKPKKVVYVSCNPGTLARDMKILTDGGYVAKKVQPVDMFPMTTHIEAVTVLHLN.

Residues 5–63 form the TRAM domain; that stretch reads LLKKNQSIELTIEDLTHDGSGVGKIDGYPFFIPNTLPGEKVTAKIIKLNKNYGFARMEN. [4Fe-4S] cluster contacts are provided by Cys76, Cys82, Cys85, and Cys162. Residues Gln285, Tyr314, Glu335, and Asp383 each contribute to the S-adenosyl-L-methionine site. Residue Cys410 is the Nucleophile of the active site.

This sequence belongs to the class I-like SAM-binding methyltransferase superfamily. RNA M5U methyltransferase family.

This is an uncharacterized protein from Listeria monocytogenes serovar 1/2a (strain ATCC BAA-679 / EGD-e).